We begin with the raw amino-acid sequence, 148 residues long: uncharacterized protein (148 aa).

The span at 1–11 (MKPRNINNSLP) shows a compositional bias: polar residues. The interval 1–31 (MKPRNINNSLPLQPLVPDQENKNKKNEEKSV) is disordered. Positions 19-30 (QENKNKKNEEKS) are enriched in basic and acidic residues.

This is an uncharacterized protein from Escherichia coli (strain K12).